The following is a 351-amino-acid chain: Phosphate acetyltransferase (351 aa).

Belongs to the phosphate acetyltransferase and butyryltransferase family.

The protein resides in the cytoplasm. It catalyses the reaction acetyl-CoA + phosphate = acetyl phosphate + CoA. The protein operates within metabolic intermediate biosynthesis; acetyl-CoA biosynthesis; acetyl-CoA from acetate: step 2/2. The polypeptide is Phosphate acetyltransferase (pta) (Rickettsia prowazekii (strain Madrid E)).